The primary structure comprises 191 residues: Methylated-DNA--protein-cysteine methyltransferase (191 aa).

Residues Tyr120 and Arg134 each contribute to the DNA site. The Nucleophile; methyl group acceptor role is filled by Cys151.

It belongs to the MGMT family.

It localises to the nucleus. It carries out the reaction a 6-O-methyl-2'-deoxyguanosine in DNA + L-cysteinyl-[protein] = S-methyl-L-cysteinyl-[protein] + a 2'-deoxyguanosine in DNA. It catalyses the reaction a 4-O-methyl-thymidine in DNA + L-cysteinyl-[protein] = a thymidine in DNA + S-methyl-L-cysteinyl-[protein]. Functionally, involved in the cellular defense against the biological effects of O6-methylguanine (O6-MeG) and O4-methylthymine (O4-MeT) in DNA. Repairs the methylated nucleobase in DNA by stoichiometrically transferring the methyl group to a cysteine residue in the enzyme. This is a suicide reaction: the enzyme is irreversibly inactivated. This chain is Methylated-DNA--protein-cysteine methyltransferase (MGT1), found in Debaryomyces hansenii (strain ATCC 36239 / CBS 767 / BCRC 21394 / JCM 1990 / NBRC 0083 / IGC 2968) (Yeast).